The chain runs to 409 residues: Broad specificity amino-acid racemase (409 aa).

Residues 1–24 (MPFRRTLLAASLALLITGQAPLYA) form the signal peptide. A disulfide bridge connects residues cysteine 71 and cysteine 97. Lysine 75 serves as the catalytic Proton acceptor. Position 75 is an N6-(pyridoxal phosphate)lysine (lysine 75). Arginine 174 lines the substrate pocket. The active-site Proton acceptor is tyrosine 301. Methionine 349 serves as a coordination point for substrate.

It belongs to the alanine racemase family. Bsr subfamily. It depends on pyridoxal 5'-phosphate as a cofactor.

The protein localises to the periplasm. The catalysed reaction is an L-alpha-amino acid = a D-alpha-amino acid. It catalyses the reaction L-lysine = D-lysine. The enzyme catalyses L-arginine = D-arginine. It carries out the reaction L-glutamine = D-glutamine. In terms of biological role, amino-acid racemase able to utilize a broad range of substrates. Reversibly racemizes 9 of the 19 natural chiral amino acids known, including both positively charged amino acids (Lys, Arg and His) and non-beta-branched aliphatic amino acids (Ala, Leu, Met, Ser, Gln and Asn). Among these amino acids, activity is the highest with lysine and arginine, and poor or very poor with the others. Plays a primary role in the catabolism of basic amino acid, that allows P.putida strain KT2440 to grow on L-Lys and L-Arg as the sole source of carbon and nitrogen, through conversion to their respective D-enantiomers. In Pseudomonas putida (strain ATCC 47054 / DSM 6125 / CFBP 8728 / NCIMB 11950 / KT2440), this protein is Broad specificity amino-acid racemase.